Consider the following 147-residue polypeptide: D-aminoacyl-tRNA deacylase (147 aa).

The short motif at 136–137 (GP) is the Gly-cisPro motif, important for rejection of L-amino acids element.

This sequence belongs to the DTD family. In terms of assembly, homodimer.

It is found in the cytoplasm. It catalyses the reaction glycyl-tRNA(Ala) + H2O = tRNA(Ala) + glycine + H(+). The enzyme catalyses a D-aminoacyl-tRNA + H2O = a tRNA + a D-alpha-amino acid + H(+). An aminoacyl-tRNA editing enzyme that deacylates mischarged D-aminoacyl-tRNAs. Also deacylates mischarged glycyl-tRNA(Ala), protecting cells against glycine mischarging by AlaRS. Acts via tRNA-based rather than protein-based catalysis; rejects L-amino acids rather than detecting D-amino acids in the active site. By recycling D-aminoacyl-tRNA to D-amino acids and free tRNA molecules, this enzyme counteracts the toxicity associated with the formation of D-aminoacyl-tRNA entities in vivo and helps enforce protein L-homochirality. The protein is D-aminoacyl-tRNA deacylase of Streptococcus suis (strain 98HAH33).